We begin with the raw amino-acid sequence, 88 residues long: Fe-S protein maturation auxiliary factor SufT (88 aa).

This sequence belongs to the MIP18 family.

In terms of biological role, involved in the maturation of iron-sulfur (Fe-S) proteins. May function as a Fe-S cluster carrier. Is required for S.aureus growth under conditions that impose a high demand for lipoic acid, likely via a role in the maturation of the lipoate synthase LipA. Is non-essential for growth in conditions that impose a low demand for lipoic acid or Fe-S clusters, such as fermentative growth. Also seems to be involved in the maturation of AcnA, LeuCD and IlvD proteins, that utilize Fe-S cluster cofactors, and its role increases under conditions of high-demand for Fe-S clusters (respiratory growth). Is not involved in the repair of Fe-S clusters damaged by reactive oxygen species or in the physical protection of Fe-S clusters from oxidants. Displays synergy with the Fe-S cluster carrier Nfu. The chain is Fe-S protein maturation auxiliary factor SufT from Staphylococcus aureus (strain USA300).